The primary structure comprises 133 residues: MAKEYSRTQRIGDQMQRELAQLIRREVKDPRVGLVTITAVEVSRDVGHAKIFITVMGQDNAEDIAQSIKVLNAAAGFLRMQLAREMKLRSVPQLHFHYDESVVRGAHLSALIERAVAEDNQHVAAAEPEDTKE.

This sequence belongs to the RbfA family. In terms of assembly, monomer. Binds 30S ribosomal subunits, but not 50S ribosomal subunits or 70S ribosomes.

The protein localises to the cytoplasm. Functionally, one of several proteins that assist in the late maturation steps of the functional core of the 30S ribosomal subunit. Associates with free 30S ribosomal subunits (but not with 30S subunits that are part of 70S ribosomes or polysomes). Required for efficient processing of 16S rRNA. May interact with the 5'-terminal helix region of 16S rRNA. In Pseudomonas fluorescens (strain Pf0-1), this protein is Ribosome-binding factor A.